The sequence spans 240 residues: Lactate utilization protein C (240 aa).

It belongs to the LutC/YkgG family.

In terms of biological role, is involved in L-lactate degradation and allows cells to grow with lactate as the sole carbon source. The chain is Lactate utilization protein C from Geobacillus kaustophilus (strain HTA426).